Consider the following 648-residue polypeptide: Threonine--tRNA ligase (648 aa).

In terms of domain architecture, TGS spans Met-1 to Thr-61. Residues Asp-242–Pro-540 are catalytic. Residues Cys-336, His-387, and His-517 each contribute to the Zn(2+) site.

This sequence belongs to the class-II aminoacyl-tRNA synthetase family. In terms of assembly, homodimer. It depends on Zn(2+) as a cofactor.

The protein resides in the cytoplasm. It carries out the reaction tRNA(Thr) + L-threonine + ATP = L-threonyl-tRNA(Thr) + AMP + diphosphate + H(+). Its function is as follows. Catalyzes the attachment of threonine to tRNA(Thr) in a two-step reaction: L-threonine is first activated by ATP to form Thr-AMP and then transferred to the acceptor end of tRNA(Thr). Also edits incorrectly charged L-seryl-tRNA(Thr). This chain is Threonine--tRNA ligase, found in Streptococcus equi subsp. zooepidemicus (strain H70).